Here is a 257-residue protein sequence, read N- to C-terminus: tRNA pseudouridine synthase A (257 aa).

D52 acts as the Nucleophile in catalysis. Y111 serves as a coordination point for substrate.

The protein belongs to the tRNA pseudouridine synthase TruA family. In terms of assembly, homodimer.

It catalyses the reaction uridine(38/39/40) in tRNA = pseudouridine(38/39/40) in tRNA. Functionally, formation of pseudouridine at positions 38, 39 and 40 in the anticodon stem and loop of transfer RNAs. This is tRNA pseudouridine synthase A from Cereibacter sphaeroides (strain ATCC 17025 / ATH 2.4.3) (Rhodobacter sphaeroides).